Reading from the N-terminus, the 213-residue chain is ATP phosphoribosyltransferase (213 aa).

Belongs to the ATP phosphoribosyltransferase family. Short subfamily. In terms of assembly, heteromultimer composed of HisG and HisZ subunits.

It is found in the cytoplasm. It carries out the reaction 1-(5-phospho-beta-D-ribosyl)-ATP + diphosphate = 5-phospho-alpha-D-ribose 1-diphosphate + ATP. Its pathway is amino-acid biosynthesis; L-histidine biosynthesis; L-histidine from 5-phospho-alpha-D-ribose 1-diphosphate: step 1/9. Catalyzes the condensation of ATP and 5-phosphoribose 1-diphosphate to form N'-(5'-phosphoribosyl)-ATP (PR-ATP). Has a crucial role in the pathway because the rate of histidine biosynthesis seems to be controlled primarily by regulation of HisG enzymatic activity. In Synechococcus sp. (strain RCC307), this protein is ATP phosphoribosyltransferase.